The following is a 386-amino-acid chain: Succinate--CoA ligase [ADP-forming] subunit beta (386 aa).

The ATP-grasp domain maps to 9–244 (KAVLRSYGVS…LEEEDSKEIE (236 aa)). ATP is bound by residues Lys46, 53–55 (GRG), Glu99, Cys102, and Glu107. Mg(2+) is bound by residues Asn199 and Asp213. Residues Asn264 and 321-323 (GIM) contribute to the substrate site.

Belongs to the succinate/malate CoA ligase beta subunit family. In terms of assembly, heterotetramer of two alpha and two beta subunits. The cofactor is Mg(2+).

It carries out the reaction succinate + ATP + CoA = succinyl-CoA + ADP + phosphate. It catalyses the reaction GTP + succinate + CoA = succinyl-CoA + GDP + phosphate. Its pathway is carbohydrate metabolism; tricarboxylic acid cycle; succinate from succinyl-CoA (ligase route): step 1/1. In terms of biological role, succinyl-CoA synthetase functions in the citric acid cycle (TCA), coupling the hydrolysis of succinyl-CoA to the synthesis of either ATP or GTP and thus represents the only step of substrate-level phosphorylation in the TCA. The beta subunit provides nucleotide specificity of the enzyme and binds the substrate succinate, while the binding sites for coenzyme A and phosphate are found in the alpha subunit. This chain is Succinate--CoA ligase [ADP-forming] subunit beta, found in Bacillus mycoides (strain KBAB4) (Bacillus weihenstephanensis).